Here is a 239-residue protein sequence, read N- to C-terminus: Uridylate kinase (239 aa).

13–16 (KVSG) is an ATP binding site. Gly-55 is a binding site for UMP. Residues Gly-56 and Arg-60 each coordinate ATP. UMP contacts are provided by residues Asp-75 and 136–143 (TGNPFFTT). The ATP site is built by Thr-163, Gln-164, Tyr-169, and Asp-172.

It belongs to the UMP kinase family. Homohexamer.

It is found in the cytoplasm. It carries out the reaction UMP + ATP = UDP + ADP. It functions in the pathway pyrimidine metabolism; CTP biosynthesis via de novo pathway; UDP from UMP (UMPK route): step 1/1. With respect to regulation, inhibited by UTP. Functionally, catalyzes the reversible phosphorylation of UMP to UDP. The chain is Uridylate kinase from Bartonella bacilliformis (strain ATCC 35685 / KC583 / Herrer 020/F12,63).